The chain runs to 1343 residues: DNA-directed RNA polymerase subunit beta (1343 aa).

It belongs to the RNA polymerase beta chain family. The RNAP catalytic core consists of 2 alpha, 1 beta, 1 beta' and 1 omega subunit. When a sigma factor is associated with the core the holoenzyme is formed, which can initiate transcription.

The catalysed reaction is RNA(n) + a ribonucleoside 5'-triphosphate = RNA(n+1) + diphosphate. In terms of biological role, DNA-dependent RNA polymerase catalyzes the transcription of DNA into RNA using the four ribonucleoside triphosphates as substrates. This chain is DNA-directed RNA polymerase subunit beta, found in Shewanella baltica (strain OS155 / ATCC BAA-1091).